A 350-amino-acid chain; its full sequence is Holliday junction branch migration complex subunit RuvB (350 aa).

Positions 1–20 (MIEADRLITASPREREEQQD) are disordered. Residues 4 to 184 (ADRLITASPR…FGIVQRLEFY (181 aa)) form a large ATPase domain (RuvB-L) region. ATP-binding positions include isoleucine 23, arginine 24, glycine 65, lysine 68, threonine 69, threonine 70, 131-133 (EDF), arginine 174, tyrosine 184, and arginine 221. Threonine 69 serves as a coordination point for Mg(2+). The tract at residues 185 to 255 (GIDDLATIVT…IADQALNLLD (71 aa)) is small ATPAse domain (RuvB-S). A head domain (RuvB-H) region spans residues 258–350 (ERGFDHSDRR…SGDLFAVSDE (93 aa)). Positions 294, 313, and 318 each coordinate DNA.

The protein belongs to the RuvB family. As to quaternary structure, homohexamer. Forms an RuvA(8)-RuvB(12)-Holliday junction (HJ) complex. HJ DNA is sandwiched between 2 RuvA tetramers; dsDNA enters through RuvA and exits via RuvB. An RuvB hexamer assembles on each DNA strand where it exits the tetramer. Each RuvB hexamer is contacted by two RuvA subunits (via domain III) on 2 adjacent RuvB subunits; this complex drives branch migration. In the full resolvosome a probable DNA-RuvA(4)-RuvB(12)-RuvC(2) complex forms which resolves the HJ.

It localises to the cytoplasm. The enzyme catalyses ATP + H2O = ADP + phosphate + H(+). The RuvA-RuvB-RuvC complex processes Holliday junction (HJ) DNA during genetic recombination and DNA repair, while the RuvA-RuvB complex plays an important role in the rescue of blocked DNA replication forks via replication fork reversal (RFR). RuvA specifically binds to HJ cruciform DNA, conferring on it an open structure. The RuvB hexamer acts as an ATP-dependent pump, pulling dsDNA into and through the RuvAB complex. RuvB forms 2 homohexamers on either side of HJ DNA bound by 1 or 2 RuvA tetramers; 4 subunits per hexamer contact DNA at a time. Coordinated motions by a converter formed by DNA-disengaged RuvB subunits stimulates ATP hydrolysis and nucleotide exchange. Immobilization of the converter enables RuvB to convert the ATP-contained energy into a lever motion, pulling 2 nucleotides of DNA out of the RuvA tetramer per ATP hydrolyzed, thus driving DNA branch migration. The RuvB motors rotate together with the DNA substrate, which together with the progressing nucleotide cycle form the mechanistic basis for DNA recombination by continuous HJ branch migration. Branch migration allows RuvC to scan DNA until it finds its consensus sequence, where it cleaves and resolves cruciform DNA. The protein is Holliday junction branch migration complex subunit RuvB of Ectopseudomonas mendocina (strain ymp) (Pseudomonas mendocina).